We begin with the raw amino-acid sequence, 213 residues long: Lactobacillus shifted protein (213 aa).

Positions 28 to 38 are enriched in polar residues; it reads PRFTENAMQPN. 2 disordered regions span residues 28–56 and 182–213; these read PRFTENAMQPNDPTPRPAKPNVSETDATP and PTSSYPLEPTGAAEEVNENQRVTEGATGYEQR.

This is Lactobacillus shifted protein (lbsA) from Emericella nidulans (strain FGSC A4 / ATCC 38163 / CBS 112.46 / NRRL 194 / M139) (Aspergillus nidulans).